The following is a 388-amino-acid chain: Na(+)/H(+) antiporter NhaA (388 aa).

Helical transmembrane passes span 8-28, 33-53, 59-79, 95-115, 125-145, 154-174, 179-199, 217-237, 259-279, 287-307, 328-348, and 363-383; these read FLKL…IALI, PLQG…FAAL, LLLW…GLEV, LFPV…YLLF, GWAI…ALLS, VFLL…IALF, VSLV…WMNW, VCIL…GFLI, VAYL…LNGV, ILPL…IFLF, IFAV…ISGL, and LGIL…LRMV.

Belongs to the NhaA Na(+)/H(+) (TC 2.A.33) antiporter family.

The protein localises to the cell inner membrane. It carries out the reaction Na(+)(in) + 2 H(+)(out) = Na(+)(out) + 2 H(+)(in). Its function is as follows. Na(+)/H(+) antiporter that extrudes sodium in exchange for external protons. This chain is Na(+)/H(+) antiporter NhaA, found in Photorhabdus laumondii subsp. laumondii (strain DSM 15139 / CIP 105565 / TT01) (Photorhabdus luminescens subsp. laumondii).